The following is a 380-amino-acid chain: Cytochrome b (380 aa).

A run of 4 helical transmembrane segments spans residues 33 to 53 (FGSL…FLAM), 77 to 98 (WLIR…FLHV), 113 to 133 (WNMG…GYVL), and 178 to 198 (FFAF…VHLL). Residues His-83 and His-97 each coordinate heme b. His-182 and His-196 together coordinate heme b. His-201 is an a ubiquinone binding site. 4 helical membrane passes run 226–246 (IKDF…VLFF), 288–308 (LGGV…PLLH), 320–340 (ITQT…WIGG), and 347–367 (FIMI…IFMP).

It belongs to the cytochrome b family. The cytochrome bc1 complex contains 11 subunits: 3 respiratory subunits (MT-CYB, CYC1 and UQCRFS1), 2 core proteins (UQCRC1 and UQCRC2) and 6 low-molecular weight proteins (UQCRH/QCR6, UQCRB/QCR7, UQCRQ/QCR8, UQCR10/QCR9, UQCR11/QCR10 and a cleavage product of UQCRFS1). This cytochrome bc1 complex then forms a dimer. Heme b is required as a cofactor.

It localises to the mitochondrion inner membrane. Functionally, component of the ubiquinol-cytochrome c reductase complex (complex III or cytochrome b-c1 complex) that is part of the mitochondrial respiratory chain. The b-c1 complex mediates electron transfer from ubiquinol to cytochrome c. Contributes to the generation of a proton gradient across the mitochondrial membrane that is then used for ATP synthesis. In Chionomys roberti (Robert's snow vole), this protein is Cytochrome b (MT-CYB).